The following is a 417-amino-acid chain: MSRTTTVDGAPASDTDKQSISQPNQFIKRGTPQFMRVTLALFSAGLATFALLYCVQPILPVLSQEFGLTPANSSISLSISTAMLAIGLLFTGPLSDAIGRKPVMVTALLLASICTLLSTMMTSWHGILIMRALIGLSLSGVAAVGMTYLSEEIHPSFVAFSMGLYISGNSIGGMSGRLISGVFTDFFNWRIALAAIGCFALASALMFWKILPESRHFRPTSLRPKTLFINFRLHWRDRGLPLLFAEGFLLMGSFVTLFNYIGYRLMLSPWHVSQAVVGLLSLAYLTGTWSSPKAGTMTTRYGRGPVMLFSTGVMLFGLLMTLFSSLWLIFAGMLLFSAGFFAAHSVASSWIGPRAKRAKGQASSLYLFSYYLGSSIAGTLGGVFWHNYGWNGVGAFIALMLVIALLVGTRLHRRLHA.

The interval 1–22 is disordered; it reads MSRTTTVDGAPASDTDKQSISQ. The Periplasmic segment spans residues 1-38; the sequence is MSRTTTVDGAPASDTDKQSISQPNQFIKRGTPQFMRVT. The chain crosses the membrane as a helical span at residues 39–59; that stretch reads LALFSAGLATFALLYCVQPIL. The Cytoplasmic segment spans residues 60–73; sequence PVLSQEFGLTPANS. Residues 74-94 traverse the membrane as a helical segment; it reads SISLSISTAMLAIGLLFTGPL. Over 95-101 the chain is Periplasmic; sequence SDAIGRK. The chain crosses the membrane as a helical span at residues 102–122; the sequence is PVMVTALLLASICTLLSTMMT. Residues 123 to 125 lie on the Cytoplasmic side of the membrane; that stretch reads SWH. A helical membrane pass occupies residues 126–146; it reads GILIMRALIGLSLSGVAAVGM. At 147–152 the chain is on the periplasmic side; sequence TYLSEE. The helical transmembrane segment at 153 to 173 threads the bilayer; sequence IHPSFVAFSMGLYISGNSIGG. Topologically, residues 174-190 are cytoplasmic; sequence MSGRLISGVFTDFFNWR. A helical membrane pass occupies residues 191–211; sequence IALAAIGCFALASALMFWKIL. At 212–241 the chain is on the periplasmic side; the sequence is PESRHFRPTSLRPKTLFINFRLHWRDRGLP. Residues 242 to 262 form a helical membrane-spanning segment; it reads LLFAEGFLLMGSFVTLFNYIG. The Cytoplasmic segment spans residues 263–264; it reads YR. Residues 265 to 285 form a helical membrane-spanning segment; the sequence is LMLSPWHVSQAVVGLLSLAYL. Residues 286–315 lie on the Periplasmic side of the membrane; the sequence is TGTWSSPKAGTMTTRYGRGPVMLFSTGVML. A helical membrane pass occupies residues 316-336; the sequence is FGLLMTLFSSLWLIFAGMLLF. At 337-364 the chain is on the cytoplasmic side; the sequence is SAGFFAAHSVASSWIGPRAKRAKGQASS. The chain crosses the membrane as a helical span at residues 365 to 385; the sequence is LYLFSYYLGSSIAGTLGGVFW. The Periplasmic segment spans residues 386–387; it reads HN. The chain crosses the membrane as a helical span at residues 388–408; it reads YGWNGVGAFIALMLVIALLVG. The Cytoplasmic segment spans residues 409 to 417; the sequence is TRLHRRLHA.

This sequence belongs to the major facilitator superfamily.

The protein resides in the cell inner membrane. The polypeptide is Inner membrane transport protein YnfM (ynfM) (Escherichia coli (strain K12)).